The sequence spans 758 residues: MVVTRSGLSRTRLQESSQQKRSAPRRIGTHLESTKESGSDGSTAESQPAEKQHSRSSSRTTGPAEIIVLISDDEASETESHTSGVTSVLEDQEPIVRVTRKRQIVIASTSKSTVRKRQKVAPQHASADEVVVSEAESHVSGVSMVVPSTERSSRNKANSQRDSSQESQSGTVSDAELSCSGISSLEILPRTTARNVKKKLQFPAEKNDTKITPGNKKQIVGMSVCSEDSDATQLSARPLSQRNMPNVSDSETYNSDFDDSSPRNSGKKLTAQNHQNLHIQEEKRANVVSLTEVRKENCKSLDEEDLKITEEKVINEKDSQRSLSEAQDTSLQQSVSQNHSSTPNKKPTFQLSSPDRKALMKSLEHKFAVVNVERWNDKRGGSGKKSDLAQLGGGGGGGDDNEPTGAGISDDKSSQSGVPLECDTKPCKSELSMTQDTTDSPVLLFLSSDESQQSDSSENERDTLCSVENNGQKEASAEDLEDAACDSALFVIDKTPGLSADKNFYLEDKAPSEVAIEEEKEEEEKEEENSEEDSSDSDENKDESSDEEDLLSNTKSKLLKLTSSSIDPGLNIKQLGGLYINFNVDKLQPHKETLTQIKEKKKNELLQKAVITPDFEKKHCVPPYSESKHRLQKQRRKERQKTAGNGWFGMKAPELTDELKNDLRALKMRAGMDPKRFYKKNDRDGFPKYFQVGTIVDNPADFYHSRIPKKQRKKTIVEELLADSEFRRFNRRKYSEIMAEKAANAEGKKFKKKKKFRN.

The span at 1–21 (MVVTRSGLSRTRLQESSQQKR) shows a compositional bias: polar residues. Positions 1–176 (MVVTRSGLSR…SQSGTVSDAE (176 aa)) are disordered. Serine 17, serine 133, serine 137, and serine 140 each carry phosphoserine. A compositionally biased stretch (low complexity) spans 128 to 143 (DEVVVSEAESHVSGVS). The segment covering 155 to 172 (NKANSQRDSSQESQSGTV) has biased composition (polar residues). Residues serine 173 and serine 183 each carry the phosphoserine modification. Lysine 210 participates in a covalent cross-link: Glycyl lysine isopeptide (Lys-Gly) (interchain with G-Cter in SUMO2). Phosphoserine occurs at positions 229, 240, 248, and 255. The span at 231–255 (ATQLSARPLSQRNMPNVSDSETYNS) shows a compositional bias: polar residues. Disordered regions lie at residues 231–277 (ATQL…HQNL), 312–353 (KVIN…QLSS), 377–480 (DKRG…AEDL), and 501–552 (DKNF…DLLS). Lysine 317 participates in a covalent cross-link: Glycyl lysine isopeptide (Lys-Gly) (interchain with G-Cter in SUMO2). Residues 321–353 (RSLSEAQDTSLQQSVSQNHSSTPNKKPTFQLSS) show a composition bias toward polar residues. Residues serine 324 and serine 330 each carry the phosphoserine modification. Residues lysine 345 and lysine 384 each participate in a glycyl lysine isopeptide (Lys-Gly) (interchain with G-Cter in SUMO2) cross-link. Basic and acidic residues predominate over residues 377–387 (DKRGGSGKKSD). Residues 431 to 440 (LSMTQDTTDS) are compositionally biased toward polar residues. The span at 447–456 (SSDESQQSDS) shows a compositional bias: low complexity. 2 positions are modified to phosphoserine: serine 476 and serine 512. Residues 512–541 (SEVAIEEEKEEEEKEEENSEEDSSDSDENK) adopt a coiled-coil conformation. Residues 515 to 550 (AIEEEKEEEEKEEENSEEDSSDSDENKDESSDEEDL) show a composition bias toward acidic residues. Residues 550 to 607 (LLSNTKSKLLKLTSSSIDPGLNIKQLGGLYINFNVDKLQPHKETLTQIKEKKKNELLQ) are tdBR region; mediates interaction with DNTT. Residues lysine 560, lysine 586, and lysine 608 each participate in a glycyl lysine isopeptide (Lys-Gly) (interchain with G-Cter in SUMO2) cross-link. A Phosphothreonine modification is found at threonine 612. Residues 621 to 647 (VPPYSESKHRLQKQRRKERQKTAGNGW) form a disordered region. Lysine 628 is covalently cross-linked (Glycyl lysine isopeptide (Lys-Gly) (interchain with G-Cter in SUMO2)). Residues 630–639 (RLQKQRRKER) are compositionally biased toward basic residues. Glycyl lysine isopeptide (Lys-Gly) (interchain with G-Cter in SUMO2) cross-links involve residues lysine 651, lysine 660, lysine 688, and lysine 733.

As to quaternary structure, forms a ternary complex with DNTT and core histone; interaction with PCNA releases DNTT and H2A/H2B histones from this ternary complex. Interacts with ESR1, ESR2, PPARG and RXRA. Part of the small subunit (SSU) processome, composed of more than 70 proteins and the RNA chaperone small nucleolar RNA (snoRNA) U3.

The protein resides in the nucleus. It localises to the nucleolus. In terms of biological role, regulates the transcriptional activity of DNTT and ESR1. May function as a chromatin remodeling protein. Part of the small subunit (SSU) processome, first precursor of the small eukaryotic ribosomal subunit. During the assembly of the SSU processome in the nucleolus, many ribosome biogenesis factors, an RNA chaperone and ribosomal proteins associate with the nascent pre-rRNA and work in concert to generate RNA folding, modifications, rearrangements and cleavage as well as targeted degradation of pre-ribosomal RNA by the RNA exosome. This Mus musculus (Mouse) protein is Deoxynucleotidyltransferase terminal-interacting protein 2 (Dnttip2).